A 289-amino-acid polypeptide reads, in one-letter code: Early E1A protein (289 aa).

Positions 41–49 are interaction with RB1 in competition with E2F1; sequence PTLHELYDL. The tract at residues 76–140 is interaction with UBE2I; it reads EGIDLLTFPP…PSDDEDEEGE (65 aa). A disordered region spans residues 82 to 107; that stretch reads TFPPAPGSPEPPHLSRQPEQPEQRAL. A compositionally biased stretch (pro residues) spans 84-93; it reads PPAPGSPEPP. S89 is modified (phosphoserine; by host). Residues 113–117 carry the PXLXP motif, interaction with host ZMYND11 motif; the sequence is PNLVP. Residues 122–126 carry the LXCXE motif, interaction with host RB1 and TMEM173/STING motif; it reads LTCHE. Residues 154-174 fold into a zinc finger; it reads CRSCHYHRRNTGDPDIMCSLC. Residues 187 to 245 form a disordered region; that stretch reads VSEPEPEPEPEPEPARPTRRPKLVPAILRRPTSPVSRECNSSTDSCDSGPSNTPPEIHP. Phosphoserine; by host is present on residues S219 and S231. Polar residues predominate over residues 219–237; sequence SPVSRECNSSTDSCDSGPS. The Bipartite nuclear localization signal signature appears at 258–289; sequence RVGGRRQAVECIEDLLNESGQPLDLSCKRPRP. The PXDLS motif, CTBP-binding signature appears at 279–283; that stretch reads PLDLS.

It belongs to the adenoviridae E1A protein family. Interacts with host UBE2I; this interaction interferes with polySUMOylation. Interacts with host RB1; this interaction induces the aberrant dissociation of RB1-E2F1 complex thereby disrupting the activity of RB1 and activating E2F1-regulated genes. Interacts with host ATF7; the interaction enhances ATF7-mediated viral transactivation activity which requires the zinc binding domains of both proteins. Isoform early E1A 32 kDa protein and isoform early E1A 26 kDa protein interact (via N-terminus) with CUL1 and E3 ubiquitin ligase RBX1; these interactions inhibit RBX1-CUL1-dependent elongation reaction of ubiquitin chains and attenuate ubiquitination of SCF(FBXW7) target proteins. Interacts (via PXLXP motif) with host ZMYND11/BS69 (via MYND-type zinc finger); this interaction inhibits E1A mediated transactivation. Interacts with host EP300; this interaction stimulates the acetylation of RB1 by recruiting EP300 and RB1 into a multimeric-protein complex. Interacts with host CTBP1 and CTBP2; this interaction seems to potentiate viral replication. Interacts with host DCAF7. Interacts with host DYRK1A. Interacts with host KPNA4; this interaction allows E1A import into the host nucleus. Interacts with host EP400; this interaction stabilizes MYC. Interacts (via LXCXE motif) with host TMEM173/STING; this interaction impairs the ability of TMEM173/STING to sense cytosolic DNA and promote the production of type I interferon (IFN-alpha and IFN-beta). Interacts (via C-terminus) with host ZBED1/hDREF (via C-terminus); the interaction is direct.

It localises to the host nucleus. Its function is as follows. Plays a role in viral genome replication by driving entry of quiescent cells into the cell cycle. Stimulation of progression from G1 to S phase allows the virus to efficiently use the cellular DNA replicating machinery to achieve viral genome replication. E1A protein has both transforming and trans-activating activities. Induces the disassembly of the E2F1 transcription factor from RB1 by direct competition for the same binding site on RB1, with subsequent transcriptional activation of E2F1-regulated S-phase genes and of the E2 region of the adenoviral genome. Release of E2F1 leads to the ARF-mediated inhibition of MDM2 and causes TP53/p53 to accumulate because it is not targeted for degradation by MDM2-mediated ubiquitination anymore. This increase in TP53, in turn, would arrest the cell proliferation and direct its death but this effect is counteracted by the viral protein E1B-55K. Inactivation of the ability of RB1 to arrest the cell cycle is critical for cellular transformation, uncontrolled cellular growth and proliferation induced by viral infection. Interaction with RBX1 and CUL1 inhibits ubiquitination of the proteins targeted by SCF(FBXW7) ubiquitin ligase complex, and may be linked to unregulated host cell proliferation. The tumorigenesis-restraining activity of E1A may be related to the disruption of the host CtBP-CtIP complex through the CtBP binding motif. Interacts with host TBP protein; this interaction probably disrupts the TBP-TATA complex. Interaction with host TMEM173/STING impairs the ability of TMEM173/STING to sense cytosolic DNA and promote the production of type I interferon (IFN-alpha and IFN-beta). Promotes the sumoylation of host ZBED1/hDREF with SUMO1. The chain is Early E1A protein from Homo sapiens (Human).